The following is a 276-amino-acid chain: Acetyl-coenzyme A carboxylase carboxyl transferase subunit beta (276 aa).

A CoA carboxyltransferase N-terminal domain is found at 24–276 (LWRECSNCHE…NNLLNLHSDK (253 aa)). Zn(2+) is bound by residues Cys-28, Cys-31, Cys-46, and Cys-49. The C4-type zinc finger occupies 28–49 (CSNCHEKFYYRRAGVYEVCPNC).

The protein belongs to the AccD/PCCB family. Acetyl-CoA carboxylase is a heterohexamer composed of biotin carboxyl carrier protein (AccB), biotin carboxylase (AccC) and two subunits each of ACCase subunit alpha (AccA) and ACCase subunit beta (AccD). The cofactor is Zn(2+).

The protein localises to the cytoplasm. The enzyme catalyses N(6)-carboxybiotinyl-L-lysyl-[protein] + acetyl-CoA = N(6)-biotinyl-L-lysyl-[protein] + malonyl-CoA. The protein operates within lipid metabolism; malonyl-CoA biosynthesis; malonyl-CoA from acetyl-CoA: step 1/1. Its function is as follows. Component of the acetyl coenzyme A carboxylase (ACC) complex. Biotin carboxylase (BC) catalyzes the carboxylation of biotin on its carrier protein (BCCP) and then the CO(2) group is transferred by the transcarboxylase to acetyl-CoA to form malonyl-CoA. This is Acetyl-coenzyme A carboxylase carboxyl transferase subunit beta from Pediococcus pentosaceus (strain ATCC 25745 / CCUG 21536 / LMG 10740 / 183-1w).